Consider the following 386-residue polypeptide: Probable pectin lyase F (386 aa).

Positions 1-16 (MKTAVLSLLLALQAYA) are cleaved as a signal peptide. Cysteine 77 and cysteine 101 are joined by a disulfide. Asparagine 124 is a glycosylation site (N-linked (GlcNAc...) asparagine). The active site involves arginine 251. Residues cysteine 326 and cysteine 334 are joined by a disulfide bond.

The protein belongs to the polysaccharide lyase 1 family.

Its subcellular location is the secreted. The enzyme catalyses Eliminative cleavage of (1-&gt;4)-alpha-D-galacturonan methyl ester to give oligosaccharides with 4-deoxy-6-O-methyl-alpha-D-galact-4-enuronosyl groups at their non-reducing ends.. Its function is as follows. Pectinolytic enzymes consist of four classes of enzymes: pectin lyase, polygalacturonase, pectin methylesterase and rhamnogalacturonase. Among pectinolytic enzymes, pectin lyase is the most important in depolymerization of pectin, since it cleaves internal glycosidic bonds of highly methylated pectins. This is Probable pectin lyase F (pelF) from Neosartorya fischeri (strain ATCC 1020 / DSM 3700 / CBS 544.65 / FGSC A1164 / JCM 1740 / NRRL 181 / WB 181) (Aspergillus fischerianus).